Here is a 198-residue protein sequence, read N- to C-terminus: Recombination protein RecR (198 aa).

The segment at 57 to 72 adopts a C4-type zinc-finger fold; that stretch reads CSVCGHITENDPCYIC. The 96-residue stretch at 80 to 175 folds into the Toprim domain; it reads SVICVVEDDK…KVTRLAQGLS (96 aa).

It belongs to the RecR family.

May play a role in DNA repair. It seems to be involved in an RecBC-independent recombinational process of DNA repair. It may act with RecF and RecO. The chain is Recombination protein RecR from Staphylococcus epidermidis (strain ATCC 35984 / DSM 28319 / BCRC 17069 / CCUG 31568 / BM 3577 / RP62A).